The primary structure comprises 547 residues: NADH-ubiquinone oxidoreductase chain 5 (547 aa).

15 consecutive transmembrane segments (helical) span residues 3 to 23 (ISIF…IFFV), 45 to 65 (YFNS…VLVF), 80 to 100 (YFML…SGCF), 101 to 121 (SMLV…LFYN), 132 to 152 (TVLT…STIF), 198 to 218 (ISSL…IMNF), 227 to 247 (VIMI…MAAL), 264 to 284 (MGFS…IHLL), 319 to 339 (VPYF…GLVF), 352 to 372 (FFFS…SVFL), 399 to 419 (VVMN…IWWM), 430 to 450 (FLYV…VVGF), 460 to 477 (FVYK…VYGL), 485 to 505 (LFLG…GFWS), and 512 to 532 (LYFN…WGCI).

The protein belongs to the complex I subunit 5 family.

It is found in the mitochondrion inner membrane. It carries out the reaction a ubiquinone + NADH + 5 H(+)(in) = a ubiquinol + NAD(+) + 4 H(+)(out). Its function is as follows. Core subunit of the mitochondrial membrane respiratory chain NADH dehydrogenase (Complex I) that is believed to belong to the minimal assembly required for catalysis. Complex I functions in the transfer of electrons from NADH to the respiratory chain. The immediate electron acceptor for the enzyme is believed to be ubiquinone. In Ascaris suum (Pig roundworm), this protein is NADH-ubiquinone oxidoreductase chain 5 (ND5).